The following is a 608-amino-acid chain: Dihydroxyacetone kinase (608 aa).

The DhaK domain occupies 8–357 (YKKDLVLSHL…LDHKTSAPGW (350 aa)). Substrate-binding positions include 53 to 56 (GSGH), Lys105, and Asp110. Catalysis depends on His234, which acts as the Tele-hemiaminal-histidine intermediate. One can recognise a DhaL domain in the interval 392–599 (KLYADLLESG…LAALISGITD (208 aa)). ATP is bound by residues 421–424 (DGDC), 467–468 (TS), 523–524 (TL), and 584–586 (DPG).

This sequence belongs to the dihydroxyacetone kinase (DAK) family.

The protein resides in the cytoplasm. The enzyme catalyses dihydroxyacetone + ATP = dihydroxyacetone phosphate + ADP + H(+). It catalyses the reaction D-glyceraldehyde + ATP = D-glyceraldehyde 3-phosphate + ADP + H(+). The protein operates within polyol metabolism; glycerol fermentation; glycerone phosphate from glycerol (oxidative route): step 2/2. Its function is as follows. Catalyzes both the phosphorylation of dihydroxyacetone and of glyceraldehyde. The chain is Dihydroxyacetone kinase (DAK) from Komagataella pastoris (Yeast).